We begin with the raw amino-acid sequence, 180 residues long: Protein Flattop (180 aa).

The interval 111–180 (PQISGKASGK…AGDKVLQAQS (70 aa)) is disordered.

The protein belongs to the Flattop family.

It localises to the cytoplasm. The protein localises to the cytoskeleton. The protein resides in the cilium basal body. Its subcellular location is the cell projection. It is found in the cilium. It localises to the apical cell membrane. The protein localises to the cilium axoneme. In terms of biological role, microtubule inner protein (MIP) part of the dynein-decorated doublet microtubules (DMTs) in cilia axoneme. Acts as a regulator of cilium basal body docking and positioning in mono- and multiciliated cells. Regulates basal body docking and cilia formation in multiciliated lung cells. Regulates kinocilium positioning and stereocilia bundle morphogenesis in the inner ear. This is Protein Flattop from Xenopus laevis (African clawed frog).